We begin with the raw amino-acid sequence, 188 residues long: MASWLPETLFEIVGQGPAPSKDYYQLLITRTQIIFRWWKISLRSEYRSAKPGETKESHEDFLDNSHLQVQVAVVFGTKILDYVFNLCEGKFDYLERLSDRLLLKIICYLDLEDIASLSQTSSKFEKLCKSDLLWEQIVQSTCDTITPDMRALAKNMGWRQMFLTNNIQLQRQTRKKKQRQENQAEKLA.

The 47-residue stretch at F91–I137 folds into the F-box domain.

In terms of assembly, directly interacts with SKP1 and CUL1.

Substrate-recognition component of the SCF (SKP1-CUL1-F-box protein)-type E3 ubiquitin ligase complex. In Mus musculus (Mouse), this protein is F-box only protein 36 (Fbxo36).